The chain runs to 127 residues: Large ribosomal subunit protein bL17 (127 aa).

Belongs to the bacterial ribosomal protein bL17 family. As to quaternary structure, part of the 50S ribosomal subunit. Contacts protein L32.

This Levilactobacillus brevis (strain ATCC 367 / BCRC 12310 / CIP 105137 / JCM 1170 / LMG 11437 / NCIMB 947 / NCTC 947) (Lactobacillus brevis) protein is Large ribosomal subunit protein bL17.